We begin with the raw amino-acid sequence, 76 residues long: Esculentin-2MT1 (76 aa).

Positions 1–22 are cleaved as a signal peptide; sequence MFTMKKPLLLLFFLGTISLSLC. A propeptide spanning residues 23–37 is cleaved from the precursor; that stretch reads EEERNADEDDGEKEV. Cys70 and Cys76 are oxidised to a cystine.

It belongs to the frog skin active peptide (FSAP) family. Esculentin subfamily. As to expression, expressed by the skin glands.

The protein localises to the secreted. In terms of biological role, antimicrobial peptide. This is Esculentin-2MT1 from Amolops mantzorum (Sichuan torrent frog).